Reading from the N-terminus, the 459-residue chain is Ribulose bisphosphate carboxylase large chain (459 aa).

Lysine 4 bears the N6,N6,N6-trimethyllysine mark. Residues asparagine 113 and threonine 163 each contribute to the substrate site. Catalysis depends on lysine 165, which acts as the Proton acceptor. Lysine 167 contacts substrate. Residues lysine 191, aspartate 193, and glutamate 194 each coordinate Mg(2+). An N6-carboxylysine modification is found at lysine 191. The Proton acceptor role is filled by histidine 284. 3 residues coordinate substrate: arginine 285, histidine 317, and serine 369.

This sequence belongs to the RuBisCO large chain family. Type I subfamily. Heterohexadecamer of 8 large chains and 8 small chains; disulfide-linked. The disulfide link is formed within the large subunit homodimers. The cofactor is Mg(2+). The disulfide bond which can form in the large chain dimeric partners within the hexadecamer appears to be associated with oxidative stress and protein turnover.

It localises to the plastid. Its subcellular location is the chloroplast. It carries out the reaction 2 (2R)-3-phosphoglycerate + 2 H(+) = D-ribulose 1,5-bisphosphate + CO2 + H2O. The enzyme catalyses D-ribulose 1,5-bisphosphate + O2 = 2-phosphoglycolate + (2R)-3-phosphoglycerate + 2 H(+). In terms of biological role, ruBisCO catalyzes two reactions: the carboxylation of D-ribulose 1,5-bisphosphate, the primary event in carbon dioxide fixation, as well as the oxidative fragmentation of the pentose substrate in the photorespiration process. Both reactions occur simultaneously and in competition at the same active site. In Heuchera micrantha (Alum root), this protein is Ribulose bisphosphate carboxylase large chain.